The chain runs to 302 residues: Acetylglutamate kinase (302 aa).

Substrate-binding positions include 68–69 (GG), arginine 90, and asparagine 195.

The protein belongs to the acetylglutamate kinase family. ArgB subfamily.

It localises to the cytoplasm. It catalyses the reaction N-acetyl-L-glutamate + ATP = N-acetyl-L-glutamyl 5-phosphate + ADP. It functions in the pathway amino-acid biosynthesis; L-arginine biosynthesis; N(2)-acetyl-L-ornithine from L-glutamate: step 2/4. Catalyzes the ATP-dependent phosphorylation of N-acetyl-L-glutamate. The sequence is that of Acetylglutamate kinase from Marinomonas sp. (strain MWYL1).